A 251-amino-acid chain; its full sequence is Duodenase-1 (251 aa).

The first 17 residues, 1–17 (MVLLLLLVALLSPTGEA), serve as a signal peptide directing secretion. Positions 18–19 (GK) are excised as a propeptide. Positions 20-242 (IIGGHEAKPH…SFLSWIHSTM (223 aa)) constitute a Peptidase S1 domain. Cysteines 48 and 64 form a disulfide. Residue histidine 63 is the Charge relay system of the active site. Asparagine 70 carries an N-linked (GlcNAc...) asparagine glycan. Aspartate 107 acts as the Charge relay system in catalysis. Cystine bridges form between cysteine 141-cysteine 207 and cysteine 172-cysteine 186. Serine 201 (charge relay system) is an active-site residue.

This sequence belongs to the peptidase S1 family. In terms of assembly, monomer.

Protease which has both trypsin-like and chymotrypsin-like activities. Shows a preferential cleavage after Lys, Arg, Tyr, Phe, and Leu residues. The chain is Duodenase-1 (BDMD1) from Bos taurus (Bovine).